The sequence spans 484 residues: UDP-N-acetylmuramoyl-L-alanyl-D-glutamate--L-lysine ligase (484 aa).

S43 contributes to the UDP-N-acetyl-alpha-D-muramoyl-L-alanyl-D-glutamate binding site. Residue 119–125 (GTKGKTT) coordinates ATP. UDP-N-acetyl-alpha-D-muramoyl-L-alanyl-D-glutamate is bound by residues 161–162 (TT), S188, and R196. K230 is modified (N6-carboxylysine). An L-lysine recognition motif motif is present at residues 405 to 408 (DDPN).

This sequence belongs to the MurCDEF family. MurE subfamily. Post-translationally, carboxylation is probably crucial for Mg(2+) binding and, consequently, for the gamma-phosphate positioning of ATP.

It is found in the cytoplasm. The enzyme catalyses UDP-N-acetyl-alpha-D-muramoyl-L-alanyl-D-glutamate + L-lysine + ATP = UDP-N-acetyl-alpha-D-muramoyl-L-alanyl-gamma-D-glutamyl-L-lysine + ADP + phosphate + H(+). It functions in the pathway cell wall biogenesis; peptidoglycan biosynthesis. In terms of biological role, catalyzes the addition of L-lysine to the nucleotide precursor UDP-N-acetylmuramoyl-L-alanyl-D-glutamate (UMAG) in the biosynthesis of bacterial cell-wall peptidoglycan. In Streptococcus agalactiae serotype Ia (strain ATCC 27591 / A909 / CDC SS700), this protein is UDP-N-acetylmuramoyl-L-alanyl-D-glutamate--L-lysine ligase.